Here is a 357-residue protein sequence, read N- to C-terminus: DNA integrity scanning protein DisA (357 aa).

The DAC domain maps to 9 to 147 (DRKLLEILKT…DDIKYILRDS (139 aa)). ATP contacts are provided by residues glycine 76, leucine 94, and 107-111 (TRHRT).

It belongs to the DisA family. Homooctamer. Mg(2+) serves as cofactor.

The catalysed reaction is 2 ATP = 3',3'-c-di-AMP + 2 diphosphate. Participates in a DNA-damage check-point that is active prior to asymmetric division when DNA is damaged. DisA forms globular foci that rapidly scan along the chromosomes during sporulation, searching for lesions. When a lesion is present, DisA pauses at the lesion site. This triggers a cellular response that culminates in a temporary block in sporulation initiation. In terms of biological role, also has diadenylate cyclase activity, catalyzing the condensation of 2 ATP molecules into cyclic di-AMP (c-di-AMP). c-di-AMP acts as a signaling molecule that couples DNA integrity with progression of sporulation. The rise in c-di-AMP level generated by DisA while scanning the chromosome, operates as a positive signal that advances sporulation; upon encountering a lesion, the DisA focus arrests at the damaged site and halts c-di-AMP synthesis. The chain is DNA integrity scanning protein DisA from Clostridium acetobutylicum (strain ATCC 824 / DSM 792 / JCM 1419 / IAM 19013 / LMG 5710 / NBRC 13948 / NRRL B-527 / VKM B-1787 / 2291 / W).